An 886-amino-acid polypeptide reads, in one-letter code: 3',5'-cyclic-AMP phosphodiesterase 4A (886 aa).

The disordered stretch occupies residues 1-128 (MEPPTVPSER…GRSPLDSQAS (128 aa)). At serine 13 the chain carries Phosphoserine. Residues 36–46 (QPRTPIRIQQR) show a composition bias toward low complexity. Positions 51–78 (SAERAERERQPHRPIERADAMDTSDRPG) are enriched in basic and acidic residues. Positions 93–104 (TGTGSGGAGGGS) are enriched in gly residues. 2 positions are modified to phosphoserine: glycine 119 and leucine 123. At serine 152 the chain carries Phosphoserine; by MAPKAPK2. Phosphoserine occurs at positions 157, 165, and 209. The disordered stretch occupies residues 294-331 (KQNEVEIPSPTMKEREKQQAPRPRPSQPPPPPVPHLQP). The segment covering 315–328 (RPRPSQPPPPPVPH) has biased composition (pro residues). A Phosphoserine modification is found at serine 346. Residues 357-686 (VKTDQEELLA…DWYYSAIRQS (330 aa)) enclose the PDEase domain. Residue lysine 358 forms a Glycyl lysine isopeptide (Lys-Gly) (interchain with G-Cter in SUMO) linkage. The active-site Proton donor is the histidine 433. Histidine 433 is a binding site for 3',5'-cyclic AMP. Positions 433 and 437 each coordinate AMP. Residues histidine 437, histidine 473, aspartate 474, and aspartate 591 each coordinate Zn(2+). Aspartate 474, aspartate 591, glutamine 642, and phenylalanine 645 together coordinate AMP. Aspartate 474 is a Mg(2+) binding site. Aspartate 474 contacts Mn(2+). 3',5'-cyclic AMP contacts are provided by glutamine 642 and phenylalanine 645. Disordered regions lie at residues 682–705 (AIRQ…PLPD) and 866–886 (FGED…GDPT). Phosphoserine is present on residues serine 686 and serine 688. The segment covering 876 to 886 (PGGGGSGGDPT) has biased composition (gly residues).

The protein belongs to the cyclic nucleotide phosphodiesterase family. PDE4 subfamily. As to quaternary structure, interacts with LYN (via SH3 domain). Interacts with ARRB2. Requires Zn(2+) as cofactor. The cofactor is Mg(2+). Mn(2+) serves as cofactor. Post-translationally, proteolytically cleaved by CASP3. Phosphorylated at Ser-119 by PKA. As to expression, expressed in lymphoid cell subsets including CD8-positive T cells and T-helper 2 cells. Expressed in dendritic cells. Highly expressed in liver, stomach, testis, thyroid and adrenal glands and at a lower extent in placenta, kidney, pancreas, ovary, uterus and skin. Expressed in myeloid cell subsets including dendritic cells, monocytes, macrophages, eosinophils and mast cells. Expressed in natural killer cells. Expressed in bronchial smooth muscle. In terms of tissue distribution, expressed at high levels in the heart and small intestine. It is also found in the brain, kidney, spleen, colon, salivary gland, ovary and peripheral blood lymphocytes. As to expression, expressed predominantly in skeletal muscle and brain and at lower levels in the testis. Found in specific neuronal subpopulations including cortical pyramidal neurons, horn neurons in the spinal cord and Purkinje cells in cerebellum (at protein level).

Its subcellular location is the cytoplasm. It is found in the perinuclear region. The protein localises to the cell projection. It localises to the ruffle membrane. The protein resides in the cytosol. Its subcellular location is the membrane. The enzyme catalyses 3',5'-cyclic AMP + H2O = AMP + H(+). The protein operates within purine metabolism; 3',5'-cyclic AMP degradation; AMP from 3',5'-cyclic AMP: step 1/1. Inhibited by rolipram, cilomilast, Ro 20-1724, roflumilast and denbufylline. Its activity is regulated as follows. Inhibited by rolipram. With respect to regulation, inhibited by rolipram and cilomilast. In terms of biological role, hydrolyzes the second messenger 3',5'-cyclic AMP (cAMP), which is a key regulator of many important physiological processes. Functionally, efficiently hydrolyzes cAMP. Its function is as follows. Efficiently hydrolyzes cAMP. The phosphodiesterase activity is not affected by calcium, calmodulin or cyclic GMP (cGMP) levels. Does not hydrolyze cGMP. This is 3',5'-cyclic-AMP phosphodiesterase 4A (PDE4A) from Homo sapiens (Human).